Reading from the N-terminus, the 157-residue chain is Endoribonuclease YbeY (157 aa).

Positions 116, 120, and 126 each coordinate Zn(2+).

It belongs to the endoribonuclease YbeY family. Requires Zn(2+) as cofactor.

The protein resides in the cytoplasm. Its function is as follows. Single strand-specific metallo-endoribonuclease involved in late-stage 70S ribosome quality control and in maturation of the 3' terminus of the 16S rRNA. The chain is Endoribonuclease YbeY from Blochmanniella pennsylvanica (strain BPEN).